The chain runs to 327 residues: uncharacterized protein (327 aa).

An N-terminal signal peptide occupies residues 1 to 24 (MKQPGFIRLATLALLSTLSFFSHG).

This is an uncharacterized protein from Salmonella typhimurium (strain LT2 / SGSC1412 / ATCC 700720).